The sequence spans 64 residues: Large ribosomal subunit protein bL35 (64 aa).

Basic residues predominate over residues 1-28 (MPKMKTKSGAAKRFKKTAGGLKHKHAFK). The interval 1–64 (MPKMKTKSGA…ARVERSLRLR (64 aa)) is disordered. Over residues 53–64 (DVARVERSLRLR) the composition is skewed to basic and acidic residues.

Belongs to the bacterial ribosomal protein bL35 family.

The sequence is that of Large ribosomal subunit protein bL35 from Pseudomonas aeruginosa (strain LESB58).